We begin with the raw amino-acid sequence, 318 residues long: Probable cell division protein WhiA (318 aa).

Positions 281-314 form a DNA-binding region, H-T-H motif; sequence SLKELGQMLVPPVGKSGVNHRLRKIEEISKKLKE.

This sequence belongs to the WhiA family.

Functionally, involved in cell division and chromosome segregation. The chain is Probable cell division protein WhiA from Thermoanaerobacter pseudethanolicus (strain ATCC 33223 / 39E) (Clostridium thermohydrosulfuricum).